Reading from the N-terminus, the 81-residue chain is RNA-binding protein Hfq (81 aa).

Positions 9–68 (DPFLNVLRRERVPVFIYLINGIKLQGEIESFDKFVILLRNTVNQMIYKHAISTIVPSRVV) constitute a Sm domain.

This sequence belongs to the Hfq family. As to quaternary structure, homohexamer.

Functionally, RNA chaperone that binds small regulatory RNA (sRNAs) and mRNAs to facilitate mRNA translational regulation in response to envelope stress, environmental stress and changes in metabolite concentrations. Also binds with high specificity to tRNAs. The chain is RNA-binding protein Hfq from Blochmanniella pennsylvanica (strain BPEN).